We begin with the raw amino-acid sequence, 476 residues long: Cysteine--tRNA ligase (476 aa).

Cys31 is a Zn(2+) binding site. The short motif at 33–43 (PTVYNYAHIGN) is the 'HIGH' region element. The Zn(2+) site is built by Cys211, His236, and Glu240. The short motif at 269 to 273 (KMSKS) is the 'KMSKS' region element. Lys272 contributes to the ATP binding site.

It belongs to the class-I aminoacyl-tRNA synthetase family. Monomer. The cofactor is Zn(2+).

The protein localises to the cytoplasm. The catalysed reaction is tRNA(Cys) + L-cysteine + ATP = L-cysteinyl-tRNA(Cys) + AMP + diphosphate. This Xanthomonas euvesicatoria pv. vesicatoria (strain 85-10) (Xanthomonas campestris pv. vesicatoria) protein is Cysteine--tRNA ligase.